Reading from the N-terminus, the 148-residue chain is Protein-export protein SecB (148 aa).

Belongs to the SecB family. Homotetramer, a dimer of dimers. One homotetramer interacts with 1 SecA dimer.

The protein localises to the cytoplasm. Its function is as follows. One of the proteins required for the normal export of preproteins out of the cell cytoplasm. It is a molecular chaperone that binds to a subset of precursor proteins, maintaining them in a translocation-competent state. It also specifically binds to its receptor SecA. The sequence is that of Protein-export protein SecB from Psychrobacter arcticus (strain DSM 17307 / VKM B-2377 / 273-4).